Reading from the N-terminus, the 374-residue chain is DNA replication and repair protein RecF (374 aa).

ATP is bound at residue 34–41; that stretch reads GDNGAGKT.

Belongs to the RecF family.

It localises to the cytoplasm. The RecF protein is involved in DNA metabolism; it is required for DNA replication and normal SOS inducibility. RecF binds preferentially to single-stranded, linear DNA. It also seems to bind ATP. This is DNA replication and repair protein RecF from Rhizobium leguminosarum bv. trifolii (strain WSM2304).